Reading from the N-terminus, the 210-residue chain is Ras-related protein RABC2a (210 aa).

GTP is bound at residue 20–27; it reads GDSGVGKS. An Effector region motif is present at residues 41–49; that stretch reads LAPTIGVDF. GTP is bound by residues 67–71, 127–130, and 157–158; these read DTAGQ, NKVD, and SA. Residues Cys-208 and Cys-209 are each lipidated (S-geranylgeranyl cysteine).

Belongs to the small GTPase superfamily. Rab family. As to quaternary structure, interacts with XI-2/MYA2.

Its subcellular location is the cell membrane. The protein localises to the cytoplasm. Intracellular vesicle trafficking and protein transport. The protein is Ras-related protein RABC2a (RABC2A) of Arabidopsis thaliana (Mouse-ear cress).